The primary structure comprises 353 residues: Phosphoribosylformylglycinamidine cyclo-ligase (353 aa).

This sequence belongs to the AIR synthase family.

The protein localises to the cytoplasm. It carries out the reaction 2-formamido-N(1)-(5-O-phospho-beta-D-ribosyl)acetamidine + ATP = 5-amino-1-(5-phospho-beta-D-ribosyl)imidazole + ADP + phosphate + H(+). The protein operates within purine metabolism; IMP biosynthesis via de novo pathway; 5-amino-1-(5-phospho-D-ribosyl)imidazole from N(2)-formyl-N(1)-(5-phospho-D-ribosyl)glycinamide: step 2/2. The chain is Phosphoribosylformylglycinamidine cyclo-ligase from Pseudomonas aeruginosa (strain ATCC 15692 / DSM 22644 / CIP 104116 / JCM 14847 / LMG 12228 / 1C / PRS 101 / PAO1).